A 299-amino-acid chain; its full sequence is Recombination-associated protein RdgC (299 aa).

This sequence belongs to the RdgC family.

The protein resides in the cytoplasm. It localises to the nucleoid. May be involved in recombination. This is Recombination-associated protein RdgC from Laribacter hongkongensis (strain HLHK9).